The primary structure comprises 154 residues: Transcriptional repressor NrdR (154 aa).

A zinc finger lies at C3 to C34. Positions P49–E139 constitute an ATP-cone domain.

The protein belongs to the NrdR family. The cofactor is Zn(2+).

Negatively regulates transcription of bacterial ribonucleotide reductase nrd genes and operons by binding to NrdR-boxes. In Cupriavidus pinatubonensis (strain JMP 134 / LMG 1197) (Cupriavidus necator (strain JMP 134)), this protein is Transcriptional repressor NrdR.